A 303-amino-acid chain; its full sequence is ATP synthase gamma chain (303 aa).

It belongs to the ATPase gamma chain family. As to quaternary structure, F-type ATPases have 2 components, CF(1) - the catalytic core - and CF(0) - the membrane proton channel. CF(1) has five subunits: alpha(3), beta(3), gamma(1), delta(1), epsilon(1). CF(0) has three main subunits: a, b and c.

It localises to the cell membrane. Produces ATP from ADP in the presence of a proton gradient across the membrane. The gamma chain is believed to be important in regulating ATPase activity and the flow of protons through the CF(0) complex. This chain is ATP synthase gamma chain, found in Oenococcus oeni (strain ATCC BAA-331 / PSU-1).